Reading from the N-terminus, the 360-residue chain is A-type ATP synthase subunit C (360 aa).

Belongs to the V-ATPase V0D/AC39 subunit family. As to quaternary structure, has multiple subunits, A(3), B(3), C, D, E, F, G, I and K(x); there may be a few other subunits as well.

It is found in the cell membrane. Its function is as follows. Component of the A-type ATP synthase that produces ATP from ADP in the presence of a proton gradient across the membrane. The sequence is that of A-type ATP synthase subunit C from Methanosarcina mazei (strain ATCC BAA-159 / DSM 3647 / Goe1 / Go1 / JCM 11833 / OCM 88) (Methanosarcina frisia).